Consider the following 323-residue polypeptide: Aldo-keto reductase family 1 member C18 (323 aa).

Residues 20 to 24 and D50 contribute to the NADP(+) site; that span reads GFGTY. The active-site Proton donor is the Y55. Substrate is bound at residue H117. Residues 166 to 167, Q190, 216 to 221, and 270 to 280 contribute to the NADP(+) site; these read SN, YGALGT, and KSFNEERIREN.

This sequence belongs to the aldo/keto reductase family. In terms of assembly, monomer.

It localises to the cytoplasm. The enzyme catalyses (17R,20S)-17,20-dihydroxypregn-4-en-3-one + NADP(+) = 17alpha-hydroxyprogesterone + NADPH + H(+). It catalyses the reaction (17R,20S)-17,20-dihydroxypregn-4-en-3-one + NAD(+) = 17alpha-hydroxyprogesterone + NADH + H(+). Its function is as follows. Catalyzes the conversion of progesterone into 20-alpha-dihydroprogesterone (20 alpha-OHP). The sequence is that of Aldo-keto reductase family 1 member C18 (Akr1c18) from Mus musculus (Mouse).